Consider the following 981-residue polypeptide: Alpha-mannosidase (981 aa).

Zn(2+)-binding residues include His23, Asp25, and Asp145. Asp145 functions as the Nucleophile in the catalytic mechanism. Asn312 carries N-linked (GlcNAc...) asparagine glycosylation. Residue His386 coordinates Zn(2+). Cystine bridges form between Cys422–Cys432, Cys442–Cys450, and Cys800–Cys807. An N-linked (GlcNAc...) asparagine glycan is attached at Asn446. The interval 938 to 957 is disordered; sequence KKMKWSVEGDNEQEPQAVRG.

Belongs to the glycosyl hydrolase 38 family. Dimer of dimers of heavy and light subunits. Zn(2+) is required as a cofactor. Post-translationally, produced as a precursor which is then proteolytically cleaved into a 66kD heavy subunit and a 44kD light subunit. Cleavage probably occurs in protein bodies/protein storage vacuoles.

Its subcellular location is the protein storage vacuole. The catalysed reaction is Hydrolysis of terminal, non-reducing alpha-D-mannose residues in alpha-D-mannosides.. Its activity is regulated as follows. Inhibited by 2,3,4,6-tetra-O-acetyl-5-fluoro-beta-L-gulopyranosyl fluoride which acts as a slow substrate, doubling as a competitive inhibitor as it forms a high steady state concentration of glycosyl-enzyme intermediate that blocks the active site. Inhibited by 2,3,4,6-tetra-O-acetyl-5-fluoro-alpha-D-mannopyranosyl fluoride which also acts as a slow substrate but no intermediates accumulate. Inhibited by EDTA. Inhibited by metal ion Cu(2+). Inhibited by metal ions Fe(2+), Cd(2+) and Co(2+). Inhibited by metal ions Ag(+) and Hg(2+). Competitively inhibited by mannono-1-4-lactone and mannono-1-5-lactone. Inhibited by swainsonine but not by 1-desoxymannojirimycin. Inhibited by pyrrolidine-3,4-diol derivatives. Its function is as follows. Liberates mannose from p-nitrophenyl-alpha-D-mannoside. Liberates mannose from further alpha-D-mannosides including methyl-, benzyl-alpha-D-mannoside, 1-6-linked di-, tri- and tetrasaccharides of alpha-D-mannose and mannosyl-rhamnose. Liberates mannose from various glycoproteins like ovalbumin and ovomucoid. Does not hydrolyze beta-D-mannosides. Has glycosyltransferase activity, forming disaccharides from mannose and lyxose but not from glucose, galactose, ribose, xylose or arabinose. The sequence is that of Alpha-mannosidase from Canavalia ensiformis (Jack bean).